We begin with the raw amino-acid sequence, 128 residues long: NADH-quinone oxidoreductase subunit A (128 aa).

3 helical membrane passes run 9-29 (FPIA…LALA), 68-88 (LLFI…VLLL), and 96-116 (LGWA…AGLV).

Belongs to the complex I subunit 3 family. NDH-1 is composed of 14 different subunits. Subunits NuoA, H, J, K, L, M, N constitute the membrane sector of the complex.

The protein resides in the cell inner membrane. The catalysed reaction is a quinone + NADH + 5 H(+)(in) = a quinol + NAD(+) + 4 H(+)(out). NDH-1 shuttles electrons from NADH, via FMN and iron-sulfur (Fe-S) centers, to quinones in the respiratory chain. The immediate electron acceptor for the enzyme in this species is believed to be ubiquinone. Couples the redox reaction to proton translocation (for every two electrons transferred, four hydrogen ions are translocated across the cytoplasmic membrane), and thus conserves the redox energy in a proton gradient. The polypeptide is NADH-quinone oxidoreductase subunit A (Anaeromyxobacter sp. (strain Fw109-5)).